A 295-amino-acid chain; its full sequence is Probable isochorismatase (295 aa).

Residues 1–21 (MGIPKIAGYPLPTPAEFPDNR) are disordered. Positions 207-286 (EIRSQKPLTL…EWWLVIEQAR (80 aa)) constitute a Carrier domain. Position 247 is an O-(pantetheine 4'-phosphoryl)serine (S247).

This sequence belongs to the isochorismatase family. Pantetheine 4'-phosphate is required as a cofactor.

The enzyme catalyses isochorismate + H2O = (2S,3S)-2,3-dihydroxy-2,3-dihydrobenzoate + pyruvate. Its pathway is siderophore biosynthesis; vulnibactin biosynthesis. In terms of biological role, involved in the biosynthesis of the catechol siderophore vulnibactin. Vulnibactin is a chelating compound involved in transporting iron from the bacterial environment into the cell cytoplasm. This chain is Probable isochorismatase (venB), found in Vibrio vulnificus (strain CMCP6).